The sequence spans 270 residues: MRLIIKNSYEDCSKWTADYICNKIIEFKPTKEKPFVLGLPTGSTPLGVYKELIKKHKEGILSFKHVVTFNMDEYVGLEASHPQSYHYFMMDNFFNHIDIEPKNIHILDGMAKDKKKECEDYEKAIRSYGKIHLFLGGIGADGHIAFNEPYSSLTSRTREKTLTRDTIIMNSRFFEGNEDLVPKTALTVGIGTIMDAEEVLIMATGHAKAEAVHQAVEGGVSHVWTVSALQLHPKSIIICDDAATDELKVKTVKYFLDIEKGNIETNVSRK.

Catalysis depends on aspartate 72, which acts as the Proton acceptor; for enolization step. Catalysis depends on aspartate 141, which acts as the For ring-opening step. Histidine 143 acts as the Proton acceptor; for ring-opening step in catalysis. The For ring-opening step role is filled by glutamate 148.

This sequence belongs to the glucosamine/galactosamine-6-phosphate isomerase family. NagB subfamily.

It carries out the reaction alpha-D-glucosamine 6-phosphate + H2O = beta-D-fructose 6-phosphate + NH4(+). Its pathway is amino-sugar metabolism; N-acetylneuraminate degradation; D-fructose 6-phosphate from N-acetylneuraminate: step 5/5. Allosterically activated by N-acetylglucosamine 6-phosphate (GlcNAc6P). In terms of biological role, catalyzes the reversible isomerization-deamination of glucosamine 6-phosphate (GlcN6P) to form fructose 6-phosphate (Fru6P) and ammonium ion. This is Glucosamine-6-phosphate deaminase from Treponema denticola (strain ATCC 35405 / DSM 14222 / CIP 103919 / JCM 8153 / KCTC 15104).